Reading from the N-terminus, the 370-residue chain is tRNA-specific 2-thiouridylase MnmA (370 aa).

Residues 6–13 (AMSGGVDS) and L32 each bind ATP. The Nucleophile role is filled by C101. C101 and C193 are oxidised to a cystine. ATP is bound at residue G125. Residues 143-145 (KDQ) are interaction with tRNA. C193 (cysteine persulfide intermediate) is an active-site residue.

The protein belongs to the MnmA/TRMU family.

Its subcellular location is the cytoplasm. It catalyses the reaction S-sulfanyl-L-cysteinyl-[protein] + uridine(34) in tRNA + AH2 + ATP = 2-thiouridine(34) in tRNA + L-cysteinyl-[protein] + A + AMP + diphosphate + H(+). Its function is as follows. Catalyzes the 2-thiolation of uridine at the wobble position (U34) of tRNA, leading to the formation of s(2)U34. This chain is tRNA-specific 2-thiouridylase MnmA, found in Rhodococcus erythropolis (strain PR4 / NBRC 100887).